The following is a 299-amino-acid chain: Pyridoxal 5'-phosphate synthase subunit PdxS (299 aa).

D29 contacts D-ribose 5-phosphate. Residue K86 is the Schiff-base intermediate with D-ribose 5-phosphate of the active site. G158 lines the D-ribose 5-phosphate pocket. R170 provides a ligand contact to D-glyceraldehyde 3-phosphate. D-ribose 5-phosphate-binding positions include G219 and G240–S241.

The protein belongs to the PdxS/SNZ family. In the presence of PdxT, forms a dodecamer of heterodimers.

It catalyses the reaction aldehydo-D-ribose 5-phosphate + D-glyceraldehyde 3-phosphate + L-glutamine = pyridoxal 5'-phosphate + L-glutamate + phosphate + 3 H2O + H(+). It functions in the pathway cofactor biosynthesis; pyridoxal 5'-phosphate biosynthesis. Its function is as follows. Catalyzes the formation of pyridoxal 5'-phosphate from ribose 5-phosphate (RBP), glyceraldehyde 3-phosphate (G3P) and ammonia. The ammonia is provided by the PdxT subunit. Can also use ribulose 5-phosphate and dihydroxyacetone phosphate as substrates, resulting from enzyme-catalyzed isomerization of RBP and G3P, respectively. The chain is Pyridoxal 5'-phosphate synthase subunit PdxS from Protochlamydia amoebophila (strain UWE25).